The chain runs to 207 residues: Large ribosomal subunit protein uL3 (207 aa).

Positions K113–A148 are disordered.

It belongs to the universal ribosomal protein uL3 family. Part of the 50S ribosomal subunit. Forms a cluster with proteins L14 and L19.

Its function is as follows. One of the primary rRNA binding proteins, it binds directly near the 3'-end of the 23S rRNA, where it nucleates assembly of the 50S subunit. The protein is Large ribosomal subunit protein uL3 of Lactococcus lactis subsp. lactis (strain IL1403) (Streptococcus lactis).